A 114-amino-acid chain; its full sequence is Nucleoid-associated protein PCC8801_2554 (114 aa).

The protein belongs to the YbaB/EbfC family. Homodimer.

Its subcellular location is the cytoplasm. The protein localises to the nucleoid. Binds to DNA and alters its conformation. May be involved in regulation of gene expression, nucleoid organization and DNA protection. The protein is Nucleoid-associated protein PCC8801_2554 of Rippkaea orientalis (strain PCC 8801 / RF-1) (Cyanothece sp. (strain PCC 8801)).